Here is a 605-residue protein sequence, read N- to C-terminus: MSQSATRNFCIIAHIDHGKSTLADRLIEMTGTLRHDEMCEQVMDSMELERERGITIKAKAIRLRYLSKDSHEYRLNLIDTPGHVDFSYEVSRTIAACEGAILVIDATQGIQAQTLANVYLAIEYNLEIIPVINKIDLPGADIPRVMGEIKSVLGYDEDAVIQISAKLGLGVPELLEAIVARVPAPKGDGKLPLRALIFDSHYDPYKGVVAYLRVADGNINKGDDLRLMGQGTEFKVLEAGYFAPAQVAALRLDVGDVGYVATGLKSVGECRVGDTVTLQHGGAIQPLIGYHPAKAMVFAGIYPTQTDDYHELREAMEKLSLNDASLSYEPESSPLLGHGFRCGFLGLLHLDIIVERLEREFNLSLVVTSPGVSLTVTRTSGEVLTVVNPNEMPLPHEIASIEEPWVSVVIITPSKYIGTVMDLVRENYGVYKNTEYLGQLAMSELGQRVQLHYDMPLRSILTTFHDQLKSRTQGYASLDYEFVGYRIANLSKIDVLVNDVAVDAFSRIIPPDKAHEIGEALVKKLKEMIPRQLYQVTLQAAIGSKIVARADISAKRKDVIAKCYGGDITRKRKLLDKQKEGKKKMRQIGKVEVPKEAFLSVLKLQ.

Positions 4 to 186 (SATRNFCIIA…AIVARVPAPK (183 aa)) constitute a tr-type G domain. Residues 16 to 21 (DHGKST) and 133 to 136 (NKID) contribute to the GTP site.

This sequence belongs to the TRAFAC class translation factor GTPase superfamily. Classic translation factor GTPase family. LepA subfamily.

The protein resides in the cell membrane. The enzyme catalyses GTP + H2O = GDP + phosphate + H(+). In terms of biological role, required for accurate and efficient protein synthesis under certain stress conditions. May act as a fidelity factor of the translation reaction, by catalyzing a one-codon backward translocation of tRNAs on improperly translocated ribosomes. Back-translocation proceeds from a post-translocation (POST) complex to a pre-translocation (PRE) complex, thus giving elongation factor G a second chance to translocate the tRNAs correctly. Binds to ribosomes in a GTP-dependent manner. This chain is Elongation factor 4, found in Dehalococcoides mccartyi (strain ATCC BAA-2266 / KCTC 15142 / 195) (Dehalococcoides ethenogenes (strain 195)).